The primary structure comprises 491 residues: UDP-N-acetylmuramate--L-alanine ligase (491 aa).

126 to 132 (GTHGKTT) contributes to the ATP binding site.

It belongs to the MurCDEF family.

It is found in the cytoplasm. The enzyme catalyses UDP-N-acetyl-alpha-D-muramate + L-alanine + ATP = UDP-N-acetyl-alpha-D-muramoyl-L-alanine + ADP + phosphate + H(+). The protein operates within cell wall biogenesis; peptidoglycan biosynthesis. Its function is as follows. Cell wall formation. The polypeptide is UDP-N-acetylmuramate--L-alanine ligase (Klebsiella pneumoniae (strain 342)).